The sequence spans 132 residues: Secreted RxLR effector protein BLR08 (132 aa).

The N-terminal stretch at 1-22 is a signal peptide; that stretch reads MRHKCLLAMAVVASMAFYSVIS. The N-linked (GlcNAc...) asparagine glycan is linked to Asn-25. Residues 36–57 are disordered; sequence NRRLRPRVEPTANELDKQSDVD. The short motif at 37–83 is the RxLR-dEER element; sequence RRLRPRVEPTANELDKQSDVDTKLEADRRLGYPGESGFMLEGELEER. Residues 111–131 traverse the membrane as a helical segment; the sequence is FFLGLFASVIGVSIISACYGI.

It belongs to the RxLR effector family. Interacts with host transcription factor NAC069.

Its subcellular location is the secreted. The protein localises to the host endoplasmic reticulum membrane. Secreted effector that inhibits stress-induced relocalization of the transcription factor NAC069 to the nucleus, thus affecting its broad role in abiotic and biotic stress responses. This chain is Secreted RxLR effector protein BLR08, found in Bremia lactucae (Lettuce downy mildew).